A 125-amino-acid chain; its full sequence is Inner membrane protein YbjM (125 aa).

Over 1 to 6 (MKHKQR) the chain is Cytoplasmic. A helical transmembrane segment spans residues 7–27 (WAGAICCFVLFIVVCLFLATH). At 28-34 (MKGAFRA) the chain is on the periplasmic side. Residues 35–55 (AGHPEIGLLFFILPGAVASFF) traverse the membrane as a helical segment. The Cytoplasmic segment spans residues 56 to 64 (SQRREVLKP). Residues 65–85 (LFGAMLAAPCSMLIMRLFFSP) form a helical membrane-spanning segment. The Periplasmic segment spans residues 86–92 (TRSFWQE). A helical membrane pass occupies residues 93 to 113 (LAWLLSAVFWCALGALCFLFI). Over 114–125 (SSLFKPQHRKNQ) the chain is Cytoplasmic.

It localises to the cell inner membrane. The chain is Inner membrane protein YbjM (ybjM) from Escherichia coli O157:H7.